The sequence spans 239 residues: MSNKKDVAVKISGGKKIREAREKVKSDTLYNLTNAVERLKSASYVKFDPTLEIVMKLGIDSRHSDQMVRGVVNLPAGTGKTVRVAVICKEEREEEAKSAGADLVGSTNIIDEIKAGKINFDVCIATPDMMAAIGSVARILGPKGLMPNPKLGTVTLDIKNAIKNAKSGQVEYRAEKAGIIHAGLGKLSFSDQDLLKNLNAFIEAVIKAKPAGLKGSYLKAMYLSSTMGASVQIDLTSIA.

It belongs to the universal ribosomal protein uL1 family. In terms of assembly, part of the 50S ribosomal subunit.

Its function is as follows. Binds directly to 23S rRNA. The L1 stalk is quite mobile in the ribosome, and is involved in E site tRNA release. Functionally, protein L1 is also a translational repressor protein, it controls the translation of the L11 operon by binding to its mRNA. In Rickettsia conorii (strain ATCC VR-613 / Malish 7), this protein is Large ribosomal subunit protein uL1.